The primary structure comprises 106 residues: Nucleoid-associated protein Fjoh_2555 (106 aa).

It belongs to the YbaB/EbfC family. In terms of assembly, homodimer.

Its subcellular location is the cytoplasm. The protein resides in the nucleoid. In terms of biological role, binds to DNA and alters its conformation. May be involved in regulation of gene expression, nucleoid organization and DNA protection. The protein is Nucleoid-associated protein Fjoh_2555 of Flavobacterium johnsoniae (strain ATCC 17061 / DSM 2064 / JCM 8514 / BCRC 14874 / CCUG 350202 / NBRC 14942 / NCIMB 11054 / UW101) (Cytophaga johnsonae).